The sequence spans 889 residues: Translation initiation factor IF-2 (889 aa).

Residues 1–299 (MTDNKDDKTL…EKFKRSQMQE (299 aa)) form a disordered region. Residues 61-76 (ITPVAATPAARPAEQR) are compositionally biased toward low complexity. A compositionally biased stretch (pro residues) spans 77–93 (PMPPQPSGRPAPQPQPH). The span at 116–182 (MEARRRALAE…EAEKTEEKVE (67 aa)) shows a compositional bias: basic and acidic residues. Positions 196-215 (RPQPGRAAPAATPAAPDGAA) are enriched in low complexity. Residues 220-231 (RGTESEEDERRR) are compositionally biased toward basic and acidic residues. In terms of domain architecture, tr-type G spans 387–554 (SRPPIVTIMG…AILLQSEILD (168 aa)). A G1 region spans residues 396–403 (GHVDHGKT). 396–403 (GHVDHGKT) lines the GTP pocket. Residues 421-425 (GITQH) are G2. The interval 442–445 (DTPG) is G3. GTP-binding positions include 442–446 (DTPGH) and 496–499 (NKID). A G4 region spans residues 496-499 (NKID). The interval 532–534 (SAK) is G5.

It belongs to the TRAFAC class translation factor GTPase superfamily. Classic translation factor GTPase family. IF-2 subfamily.

The protein resides in the cytoplasm. One of the essential components for the initiation of protein synthesis. Protects formylmethionyl-tRNA from spontaneous hydrolysis and promotes its binding to the 30S ribosomal subunits. Also involved in the hydrolysis of GTP during the formation of the 70S ribosomal complex. In Rhizobium meliloti (strain 1021) (Ensifer meliloti), this protein is Translation initiation factor IF-2.